Consider the following 586-residue polypeptide: Anaerobic glycerol-3-phosphate dehydrogenase subunit A1 (586 aa).

6–34 is an FAD binding site; that stretch reads SVLVIGGGSTGTGIARDLAMRGLDVTLVE. The disordered stretch occupies residues 559–586; it reads GGAVADGGRERAADRADDDALGGADGDN. The span at 574–586 shows a compositional bias: acidic residues; the sequence is ADDDALGGADGDN.

This sequence belongs to the FAD-dependent glycerol-3-phosphate dehydrogenase family. In terms of assembly, composed of a catalytic GlpA/B dimer and of membrane bound GlpC. FAD serves as cofactor. It depends on FMN as a cofactor.

The protein resides in the cell membrane. It carries out the reaction a quinone + sn-glycerol 3-phosphate = dihydroxyacetone phosphate + a quinol. It functions in the pathway polyol metabolism; glycerol degradation via glycerol kinase pathway; glycerone phosphate from sn-glycerol 3-phosphate (anaerobic route): step 1/1. Up-regulated by glycerol and no inhibition by glucose. Conversion of glycerol 3-phosphate to dihydroxyacetone phosphate. Required for growth on glycerol and for glycerol metabolism. The sequence is that of Anaerobic glycerol-3-phosphate dehydrogenase subunit A1 (gpdA1) from Haloferax volcanii (strain ATCC 29605 / DSM 3757 / JCM 8879 / NBRC 14742 / NCIMB 2012 / VKM B-1768 / DS2) (Halobacterium volcanii).